A 736-amino-acid polypeptide reads, in one-letter code: Phosphoribosylformylglycinamidine synthase subunit PurL (736 aa).

Residue His50 is part of the active site. The ATP site is built by Tyr53 and Lys92. A Mg(2+)-binding site is contributed by Glu94. Substrate is bound by residues 95–98 (SHNH) and Arg117. His96 (proton acceptor) is an active-site residue. Asp118 serves as a coordination point for Mg(2+). Substrate is bound at residue Gln241. Asp269 is a binding site for Mg(2+). 313–315 (ESQ) lines the substrate pocket. The ATP site is built by Asp495 and Gly532. Asn533 lines the Mg(2+) pocket. Position 535 (Ser535) interacts with substrate.

Belongs to the FGAMS family. As to quaternary structure, monomer. Part of the FGAM synthase complex composed of 1 PurL, 1 PurQ and 2 PurS subunits.

It is found in the cytoplasm. The catalysed reaction is N(2)-formyl-N(1)-(5-phospho-beta-D-ribosyl)glycinamide + L-glutamine + ATP + H2O = 2-formamido-N(1)-(5-O-phospho-beta-D-ribosyl)acetamidine + L-glutamate + ADP + phosphate + H(+). The protein operates within purine metabolism; IMP biosynthesis via de novo pathway; 5-amino-1-(5-phospho-D-ribosyl)imidazole from N(2)-formyl-N(1)-(5-phospho-D-ribosyl)glycinamide: step 1/2. Part of the phosphoribosylformylglycinamidine synthase complex involved in the purines biosynthetic pathway. Catalyzes the ATP-dependent conversion of formylglycinamide ribonucleotide (FGAR) and glutamine to yield formylglycinamidine ribonucleotide (FGAM) and glutamate. The FGAM synthase complex is composed of three subunits. PurQ produces an ammonia molecule by converting glutamine to glutamate. PurL transfers the ammonia molecule to FGAR to form FGAM in an ATP-dependent manner. PurS interacts with PurQ and PurL and is thought to assist in the transfer of the ammonia molecule from PurQ to PurL. This is Phosphoribosylformylglycinamidine synthase subunit PurL from Bartonella quintana (strain Toulouse) (Rochalimaea quintana).